The following is a 320-amino-acid chain: tRNA dimethylallyltransferase (320 aa).

ATP is bound at residue 17 to 24 (GPTASGKT). 19–24 (TASGKT) provides a ligand contact to substrate. Interaction with substrate tRNA regions lie at residues 42 to 45 (DSAL), 166 to 170 (QRIQR), and 249 to 254 (RCVGYR).

It belongs to the IPP transferase family. Monomer. Requires Mg(2+) as cofactor.

The catalysed reaction is adenosine(37) in tRNA + dimethylallyl diphosphate = N(6)-dimethylallyladenosine(37) in tRNA + diphosphate. Functionally, catalyzes the transfer of a dimethylallyl group onto the adenine at position 37 in tRNAs that read codons beginning with uridine, leading to the formation of N6-(dimethylallyl)adenosine (i(6)A). The polypeptide is tRNA dimethylallyltransferase (Herminiimonas arsenicoxydans).